Consider the following 2103-residue polypeptide: uncharacterized protein (2103 aa).

A compositionally biased stretch (low complexity) spans 1 to 12 (MSVPGTPGAMEP). A disordered region spans residues 1-61 (MSVPGTPGAM…DADDQEEEME (61 aa)). Over residues 51–61 (EDADDQEEEME) the composition is skewed to acidic residues. The 120-residue stretch at 77–196 (YELQQGYRIL…MMLEQKLALL (120 aa)) folds into the Bromo domain. 5 disordered regions span residues 730-750 (AKHK…ITKK), 853-881 (NREL…SIDS), 933-956 (QSKQ…AKLS), 1224-1244 (SASP…TLNG), and 1770-1817 (GATR…STSP). A compositionally biased stretch (basic and acidic residues) spans 865–877 (DLGKDSPKGEISK). The span at 1224-1234 (SASPTISSTGQ) shows a compositional bias: polar residues. Over residues 1235–1244 (PLSSTTTLNG) the composition is skewed to low complexity. Over residues 1773-1794 (RSVSISKRQSRTSLQFHSPGIS) the composition is skewed to polar residues. Residues 1795-1808 (TTVPTNVNTNKPQT) show a composition bias toward low complexity.

It is found in the nucleus. This is an uncharacterized protein from Homo sapiens (Human).